A 222-amino-acid chain; its full sequence is Interleukin-12 subunit alpha (222 aa).

An N-terminal signal peptide occupies residues 1-25; it reads MCPPRGLLLVTILVLLNHLDHLSLA. 3 cysteine pairs are disulfide-bonded: Cys40-Cys113, Cys67-Cys199, and Cys88-Cys126. Asn42, Asn96, Asn110, and Asn183 each carry an N-linked (GlcNAc...) asparagine glycan.

This sequence belongs to the IL-6 superfamily. Heterodimer with IL12B; disulfide-linked. This heterodimer is known as interleukin IL-12. Heterodimer with EBI3/IL27B; not disulfide-linked. This heterodimer is known as interleukin IL-35. Interacts with NBR1; this interaction promotes IL-12 secretion.

The protein resides in the secreted. Heterodimerizes with IL12B to form the IL-12 cytokine or with EBI3/IL27B to form the IL-35 cytokine. IL-12 is primarily produced by professional antigen-presenting cells (APCs) such as B-cells and dendritic cells (DCs) as well as macrophages and granulocytes and regulates T-cell and natural killer-cell responses, induces the production of interferon-gamma (IFN-gamma), favors the differentiation of T-helper 1 (Th1) cells and is an important link between innate resistance and adaptive immunity. Mechanistically, exerts its biological effects through a receptor composed of IL12R1 and IL12R2 subunits. Binding to the receptor results in the rapid tyrosine phosphorylation of a number of cellular substrates including the JAK family kinases TYK2 and JAK2. In turn, recruited STAT4 gets phosphorylated and translocates to the nucleus where it regulates cytokine/growth factor responsive genes. As part of IL-35, plays essential roles in maintaining the immune homeostasis of the liver microenvironment and also functions as an immune-suppressive cytokine. Mediates biological events through unconventional receptors composed of IL12RB2 and gp130/IL6ST heterodimers or homodimers. Signaling requires the transcription factors STAT1 and STAT4, which form a unique heterodimer that binds to distinct DNA sites. The sequence is that of Interleukin-12 subunit alpha (IL12A) from Felis catus (Cat).